The chain runs to 81 residues: Exodeoxyribonuclease 7 small subunit (81 aa).

This sequence belongs to the XseB family. As to quaternary structure, heterooligomer composed of large and small subunits.

It localises to the cytoplasm. The enzyme catalyses Exonucleolytic cleavage in either 5'- to 3'- or 3'- to 5'-direction to yield nucleoside 5'-phosphates.. Functionally, bidirectionally degrades single-stranded DNA into large acid-insoluble oligonucleotides, which are then degraded further into small acid-soluble oligonucleotides. The protein is Exodeoxyribonuclease 7 small subunit of Paramagnetospirillum magneticum (strain ATCC 700264 / AMB-1) (Magnetospirillum magneticum).